The chain runs to 992 residues: RNA-binding motif protein, X-linked-like-3 (992 aa).

The RRM domain occupies 8-86 (EKLFVGGLNL…KAIMVAQTIK (79 aa)). Disordered regions lie at residues 91–130 (SSRWVPPTPGSGSRSRFSHRTRGGGSSPQRPPSQGRPDDG), 144–169 (APMPRKRGPPPRHCASPPHKRRDPGD), 188–207 (PDYCPXRGDGNRNGYRGRDH), 278–385 (DHLP…DSSS), 397–511 (EEYQ…HRYR), 562–588 (SLDANSGGRSPNAYSGGHDSSSRSHRY), and 644–992 (NSGG…QSRY). The segment covering 284-296 (YSGGRSSSSNSYS) has biased composition (low complexity). The span at 297-316 (RSDRYGEEGCYEEYRGRSPD) shows a compositional bias: basic and acidic residues. Residues 318–334 (HSGGRNSSSNSYGQSHH) show a composition bias toward low complexity. A compositionally biased stretch (basic and acidic residues) spans 335–371 (YGGEGRYEEYRGRYEEYRGRSHEARSGGRSTDAHSGG). Residues 454-471 (THSGGRSSSSNSYGQSHR) show a composition bias toward low complexity. The segment covering 472–488 (YGGEGHYEYRGRSHDAH) has biased composition (basic and acidic residues). Composition is skewed to polar residues over residues 564-574 (DANSGGRSPNA), 644-664 (NSGGCSPNAYSGGHDSSSQSH), and 752-774 (DANSGGRSPNAYSGGRDSSSNSY). The segment covering 785–798 (HYEEYRGRSHDTHS) has biased composition (basic and acidic residues). Residues 818–828 (GRNSFSNSYGQ) are compositionally biased toward polar residues. Basic and acidic residues-rich tracts occupy residues 831 to 842 (HYGRGGRYEEYQ), 920 to 948 (SGDHDRSSNSYGRSDRYSRGRDRVGRPDR), and 981 to 992 (GRFERGEGQSRY).

The chain is RNA-binding motif protein, X-linked-like-3 (RBMXL3) from Pan troglodytes (Chimpanzee).